The primary structure comprises 246 residues: Purine nucleoside phosphorylase ORF3 (246 aa).

Residues H71, C110, and H127 each coordinate Zn(2+).

Belongs to the purine nucleoside phosphorylase YfiH/LACC1 family. In terms of assembly, homodimer. Requires Cu(2+) as cofactor. Zn(2+) serves as cofactor.

The catalysed reaction is adenosine + phosphate = alpha-D-ribose 1-phosphate + adenine. It catalyses the reaction S-methyl-5'-thioadenosine + phosphate = 5-(methylsulfanyl)-alpha-D-ribose 1-phosphate + adenine. The enzyme catalyses inosine + phosphate = alpha-D-ribose 1-phosphate + hypoxanthine. It carries out the reaction adenosine + H2O + H(+) = inosine + NH4(+). Functionally, purine nucleoside enzyme that catalyzes the phosphorolysis of adenosine and inosine nucleosides, yielding D-ribose 1-phosphate and the respective free bases, adenine and hypoxanthine. Also catalyzes the phosphorolysis of S-methyl-5'-thioadenosine into adenine and S-methyl-5-thio-alpha-D-ribose 1-phosphate. Also has adenosine deaminase activity. The sequence is that of Purine nucleoside phosphorylase ORF3 from Streptomyces griseus.